The following is a 199-amino-acid chain: MAFMEHSALTPHRRELCSRTIWLARKIRSDLTALTESYVKHQGLNKNINLDSVDGVPMASTDQWSELTEAERLQENLQAYRTFHIMLARLLEDQQVHFTPAEGDFHQAIHTLLLQVAAFAYQIEELMVLLECNIPPKDADGTPVIGGDGLFEKKLWGLKVLQELSHWTVRSIHDLRVISCHQTGIPAHGSHYIANDKEM.

The protein belongs to the CNTF family. Nervous system.

The protein resides in the cytoplasm. CNTF is a survival factor for various neuronal cell types. Seems to prevent the degeneration of motor axons after axotomy. The chain is Ciliary neurotrophic factor (CNTF) from Oryctolagus cuniculus (Rabbit).